The following is an 828-amino-acid chain: Periplasmic nitrate reductase (828 aa).

Residues 1-31 (MKLSRRSFMKANAVAAAAAAAGLSVPGVARA) constitute a signal peptide (tat-type signal). Residues 39 to 95 (IKWDKAPCRFCGTGCGVLVGTQQGRVVACQGDPDAPVNRGLNCIKGYFLPKIMYGKD) form the 4Fe-4S Mo/W bis-MGD-type domain. [4Fe-4S] cluster is bound by residues Cys-46, Cys-49, Cys-53, and Cys-81. Residues Lys-83, Gln-150, Asn-175, Cys-179, 212–219 (WGANMAEM), 243–247 (STYQH), 262–264 (QSD), Met-372, Gln-376, Asn-482, 508–509 (SD), Lys-531, Asp-558, and 718–727 (TGRVLEHWHT) each bind Mo-bis(molybdopterin guanine dinucleotide). Substrate is bound at residue Phe-794. Residues Asn-802 and Lys-819 each coordinate Mo-bis(molybdopterin guanine dinucleotide).

It belongs to the prokaryotic molybdopterin-containing oxidoreductase family. NasA/NapA/NarB subfamily. Component of the periplasmic nitrate reductase NapAB complex composed of NapA and NapB. The cofactor is [4Fe-4S] cluster. Mo-bis(molybdopterin guanine dinucleotide) is required as a cofactor. Predicted to be exported by the Tat system. The position of the signal peptide cleavage has not been experimentally proven.

It localises to the periplasm. The catalysed reaction is 2 Fe(II)-[cytochrome] + nitrate + 2 H(+) = 2 Fe(III)-[cytochrome] + nitrite + H2O. Functionally, catalytic subunit of the periplasmic nitrate reductase complex NapAB. Receives electrons from NapB and catalyzes the reduction of nitrate to nitrite. The polypeptide is Periplasmic nitrate reductase (Escherichia coli (strain K12 / MC4100 / BW2952)).